The following is a 128-amino-acid chain: Sirohydrochlorin cobaltochelatase (128 aa).

His9 serves as the catalytic Proton acceptor. His9 provides a ligand contact to Co(2+). Substrate is bound by residues Lys43 and 68–73 (FATGTH). Position 73 (His73) interacts with Co(2+).

The protein belongs to the CbiX family. CbiXS subfamily. In terms of assembly, homotetramer; dimer of dimers.

It carries out the reaction Co-sirohydrochlorin + 2 H(+) = sirohydrochlorin + Co(2+). The protein operates within cofactor biosynthesis; adenosylcobalamin biosynthesis; cob(II)yrinate a,c-diamide from sirohydrochlorin (anaerobic route): step 1/10. Its function is as follows. Catalyzes the insertion of Co(2+) into sirohydrochlorin as part of the anaerobic pathway to cobalamin biosynthesis. The sequence is that of Sirohydrochlorin cobaltochelatase from Saccharolobus islandicus (strain Y.N.15.51 / Yellowstone #2) (Sulfolobus islandicus).